We begin with the raw amino-acid sequence, 513 residues long: Light-independent protochlorophyllide reductase subunit B (513 aa).

D36 contributes to the [4Fe-4S] cluster binding site. The Proton donor role is filled by D299. G434–M435 is a binding site for substrate.

The protein belongs to the ChlB/BchB/BchZ family. As to quaternary structure, protochlorophyllide reductase is composed of three subunits; ChlL, ChlN and ChlB. Forms a heterotetramer of two ChlB and two ChlN subunits. [4Fe-4S] cluster is required as a cofactor.

The protein resides in the plastid. It is found in the chloroplast. The enzyme catalyses chlorophyllide a + oxidized 2[4Fe-4S]-[ferredoxin] + 2 ADP + 2 phosphate = protochlorophyllide a + reduced 2[4Fe-4S]-[ferredoxin] + 2 ATP + 2 H2O. The protein operates within porphyrin-containing compound metabolism; chlorophyll biosynthesis (light-independent). Its function is as follows. Component of the dark-operative protochlorophyllide reductase (DPOR) that uses Mg-ATP and reduced ferredoxin to reduce ring D of protochlorophyllide (Pchlide) to form chlorophyllide a (Chlide). This reaction is light-independent. The NB-protein (ChlN-ChlB) is the catalytic component of the complex. This chain is Light-independent protochlorophyllide reductase subunit B, found in Zygnema circumcarinatum (Green alga).